The following is a 118-amino-acid chain: Acetylcholine receptor subunit beta (118 aa).

The first 15 residues, 1–15 (APTVALLLLCALCSA), serve as a signal peptide directing secretion.

It belongs to the ligand-gated ion channel (TC 1.A.9) family. Acetylcholine receptor (TC 1.A.9.1) subfamily. Beta-1/CHRNB1 sub-subfamily. Pentamer of two alpha chains, and one each of the beta, delta, and gamma chains.

The protein localises to the postsynaptic cell membrane. It is found in the cell membrane. It carries out the reaction K(+)(in) = K(+)(out). The enzyme catalyses Na(+)(in) = Na(+)(out). After binding acetylcholine, the AChR responds by an extensive change in conformation that affects all subunits and leads to opening of an ion-conducting channel across the plasma membrane. This chain is Acetylcholine receptor subunit beta (CHRNB1), found in Gallus gallus (Chicken).